Here is a 543-residue protein sequence, read N- to C-terminus: MTATPARRTSLASPATKPVAGGLALAFLATLAGGALLALALEAGGGGFDAAANFDTYLWRVARFTIWQAVASSLRSVLFAIPIARALYAEARFPGRGLILRLFALPLALPALVAVLGVTSIYGRNGLIAHISDMLGHPMQPDIYGIAGILIAHIFFNMPLAVRLLLAAYESIPDDYWKLAAQLGMGSRARFRLIEWPVIRRSLPGMIGLVFMLCVTSFTTVLTLGGGPRATTLEVAIYQSLHFDFDPARAVALTFTQLALTLLILLILRLTGRPSEEGFTQTATPRRYGSPRKTERLFNIIVITLGFLYVALPIAGVVVSGLTADLVRLLSERIVWHAIATSLALGFSAALLAVFLSLALVAAREATRNARIANIFDTGASLILVMPPIVIGAGWFILLRHFTDPFVMAPLMVVTVNAAMAMPFAVRLLRPAWDTAASRHNKLCSQLGIKGFNRLRLIDWPSIRRPCGMAFAFAMALSLGDLGTIALFGSDALVTLPYLLLQRMGSYRTFDAAGLALILGVLCLALMMIADRAAASRKEAFLQ.

The next 12 helical transmembrane spans lie at 19-39 (VAGGLALAFLATLAGGALLAL), 64-84 (FTIWQAVASSLRSVLFAIPIA), 102-122 (LFALPLALPALVAVLGVTSIY), 142-162 (DIYGIAGILIAHIFFNMPLAV), 205-225 (GMIGLVFMLCVTSFTTVLTLG), 250-270 (AVALTFTQLALTLLILLILRL), 300-320 (IIVITLGFLYVALPIAGVVVS), 343-363 (LALGFSAALLAVFLSLALVAA), 379-399 (GASLILVMPPIVIGAGWFILL), 406-426 (FVMAPLMVVTVNAAMAMPFAV), 468-488 (GMAFAFAMALSLGDLGTIALF), and 510-530 (FDAAGLALILGVLCLALMMIA). The 205-residue stretch at 62 to 266 (ARFTIWQAVA…QLALTLLILL (205 aa)) folds into the ABC transmembrane type-1 1 domain. Residues 339–530 (IATSLALGFS…VLCLALMMIA (192 aa)) form the ABC transmembrane type-1 2 domain.

The protein belongs to the binding-protein-dependent transport system permease family. CysTW subfamily. The complex is composed of two ATP-binding proteins (ThiQ), two transmembrane proteins (ThiP) and a solute-binding protein (ThiB).

Its subcellular location is the cell inner membrane. Part of the ABC transporter complex ThiBPQ involved in thiamine import. Probably responsible for the translocation of the substrate across the membrane. The sequence is that of Thiamine transport system permease protein ThiP (thiP) from Brucella suis biovar 1 (strain 1330).